The sequence spans 570 residues: Proline--tRNA ligase (570 aa).

It belongs to the class-II aminoacyl-tRNA synthetase family. ProS type 1 subfamily. As to quaternary structure, homodimer.

It is found in the cytoplasm. The catalysed reaction is tRNA(Pro) + L-proline + ATP = L-prolyl-tRNA(Pro) + AMP + diphosphate. Functionally, catalyzes the attachment of proline to tRNA(Pro) in a two-step reaction: proline is first activated by ATP to form Pro-AMP and then transferred to the acceptor end of tRNA(Pro). As ProRS can inadvertently accommodate and process non-cognate amino acids such as alanine and cysteine, to avoid such errors it has two additional distinct editing activities against alanine. One activity is designated as 'pretransfer' editing and involves the tRNA(Pro)-independent hydrolysis of activated Ala-AMP. The other activity is designated 'posttransfer' editing and involves deacylation of mischarged Ala-tRNA(Pro). The misacylated Cys-tRNA(Pro) is not edited by ProRS. This Shewanella pealeana (strain ATCC 700345 / ANG-SQ1) protein is Proline--tRNA ligase.